A 385-amino-acid chain; its full sequence is Zinc finger protein B385R (385 aa).

2 C2H2-type zinc fingers span residues 166–190 (LQCP…FYNH) and 168–190 (CPNC…FYNH).

The protein belongs to the asfivirus B385R family.

The sequence is that of Zinc finger protein B385R from African swine fever virus (isolate Tick/South Africa/Pretoriuskop Pr4/1996) (ASFV).